The primary structure comprises 338 residues: 1-aminocyclopropane-1-carboxylate deaminase (338 aa).

Lysine 51 bears the N6-(pyridoxal phosphate)lysine mark. The active-site Nucleophile is the serine 78.

The protein belongs to the ACC deaminase/D-cysteine desulfhydrase family. In terms of assembly, homotrimer. Pyridoxal 5'-phosphate serves as cofactor.

The catalysed reaction is 1-aminocyclopropane-1-carboxylate + H2O = 2-oxobutanoate + NH4(+). Catalyzes a cyclopropane ring-opening reaction, the irreversible conversion of 1-aminocyclopropane-1-carboxylate (ACC) to ammonia and alpha-ketobutyrate. Allows growth on ACC as a nitrogen source. The chain is 1-aminocyclopropane-1-carboxylate deaminase from Burkholderia thailandensis (strain ATCC 700388 / DSM 13276 / CCUG 48851 / CIP 106301 / E264).